A 239-amino-acid polypeptide reads, in one-letter code: Small ribosomal subunit protein uS3 (239 aa).

One can recognise a KH type-2 domain in the interval 39 to 107 (VRQVLRKKMS…PVHINVIEVR (69 aa)). The disordered stretch occupies residues 214–239 (SQEKQDDGSRGDRNADRSSRRSREVR). Over residues 216–239 (EKQDDGSRGDRNADRSSRRSREVR) the composition is skewed to basic and acidic residues.

The protein belongs to the universal ribosomal protein uS3 family. As to quaternary structure, part of the 30S ribosomal subunit. Forms a tight complex with proteins S10 and S14.

Functionally, binds the lower part of the 30S subunit head. Binds mRNA in the 70S ribosome, positioning it for translation. The chain is Small ribosomal subunit protein uS3 from Xylella fastidiosa (strain M23).